Here is a 143-residue protein sequence, read N- to C-terminus: Beta/delta-urticatoxin-Uf2b (143 aa).

Residues 1–18 form the signal peptide; sequence MGAIVLVALMALVASSSA. Positions 19–80 are excised as a propeptide; that stretch reads FSDIEHNIMK…MMLSGRPQPN (62 aa). 6 disulfide bridges follow: cysteine 83/cysteine 100, cysteine 90/cysteine 105, cysteine 99/cysteine 113, cysteine 115/cysteine 129, cysteine 122/cysteine 134, and cysteine 128/cysteine 142.

Belongs to the urticatoxin-2 family. Expressed in trichomes, that are stiff epidermal hairs located on the surface of petioles and leaves.

The protein localises to the secreted. In terms of biological role, plant defense neurotoxin that causes pain and systemic symptoms in mammals via modulation of voltage-gated sodium channels (Nav). Potent modulator of human Nav1.5/SCN5A (EC(50)=55 nM), Nav1.6/SCN8A (EC(50)=0.86 nM), and Nav1.7/SCN9A (EC(50)=208 nM), where it shifts the activation threshold to more negative potentials and delays fast inactivation. Also shifts the voltage-dependence of steady-state fast inactivation of Nav1.6/SCN8A, but not that of Nav1.5/SCN5A or Nav1.7/SCN9A. On Nav1.7/SCN9A, principally acts by binding to extracellular loops of domain IV (Nav site 3). In vivo, intraplantar injection into mice causes numerous dose-dependent, immediate, and long-lasting spontaneous pain behaviors, while no swelling is observed in the injected paw. At the highest doses tested, systemic symptoms including hypokinesia and hypersalivation are observed. This chain is Beta/delta-urticatoxin-Uf2b, found in Urtica ferox (Tree nettle).